The primary structure comprises 178 residues: UPF0302 protein Bcer98_1244 (178 aa).

The protein belongs to the UPF0302 family.

The polypeptide is UPF0302 protein Bcer98_1244 (Bacillus cytotoxicus (strain DSM 22905 / CIP 110041 / 391-98 / NVH 391-98)).